Reading from the N-terminus, the 550-residue chain is Chaperonin GroEL (550 aa).

ATP is bound by residues 30 to 33 (TLGP), Lys51, 87 to 91 (DGTTT), Gly414, and Asp494.

Belongs to the chaperonin (HSP60) family. In terms of assembly, forms a cylinder of 14 subunits composed of two heptameric rings stacked back-to-back. Interacts with the co-chaperonin GroES.

Its subcellular location is the cytoplasm. The enzyme catalyses ATP + H2O + a folded polypeptide = ADP + phosphate + an unfolded polypeptide.. In terms of biological role, together with its co-chaperonin GroES, plays an essential role in assisting protein folding. The GroEL-GroES system forms a nano-cage that allows encapsulation of the non-native substrate proteins and provides a physical environment optimized to promote and accelerate protein folding. This is Chaperonin GroEL from Buchnera aphidicola subsp. Thelaxes suberi.